The following is a 341-amino-acid chain: MAFRKEELSQTLYENESEQSSETKELMLNNEESLSDWRNYFDEKLTIPGESGALNGTINGYLTLPQPDGCLLVLQHGAGSSAMSFAPVTQELLSNSDNKVGFLALDLRAHGETTLEPESDMSLETLSKDFTHAVSYVQRMFELDEKIILVGHSLGGAICAYCAFQKTIPNTSGLVVIDVVEGTAMEALGFMKTYLSNRPTSFKSIDDAISWHIKTLVTRNRLSACITVPSLLVQQEDGTFVWRTDLYKTSPYWMDWFKGLSDKFLRAPYGRMLIVAGTDRLDKTLTIGQMQGKYQLEILPETGHFVHEDVPAKISSLLLNFWHRNQPLVLPPKVGATPVLQ.

The disordered stretch occupies residues 1–24 (MAFRKEELSQTLYENESEQSSETK). Positions 9 to 20 (SQTLYENESEQS) are enriched in polar residues. Residues S153, D178, and H304 contribute to the active site.

It belongs to the AB hydrolase superfamily.

It catalyses the reaction [phosphatase 2A protein]-C-terminal L-leucine methyl ester + H2O = [phosphatase 2A protein]-C-terminal L-leucine + methanol + H(+). Its function is as follows. Demethylates proteins that have been reversibly carboxymethylated. Demethylates the phosphatase PP2A catalytic subunit. The sequence is that of Protein phosphatase methylesterase 1 (ppe1) from Schizosaccharomyces pombe (strain 972 / ATCC 24843) (Fission yeast).